Here is a 168-residue protein sequence, read N- to C-terminus: Protein-export protein SecB (168 aa).

It belongs to the SecB family. Homotetramer, a dimer of dimers. One homotetramer interacts with 1 SecA dimer.

It is found in the cytoplasm. Its function is as follows. One of the proteins required for the normal export of preproteins out of the cell cytoplasm. It is a molecular chaperone that binds to a subset of precursor proteins, maintaining them in a translocation-competent state. It also specifically binds to its receptor SecA. The protein is Protein-export protein SecB of Glaesserella parasuis serovar 5 (strain SH0165) (Haemophilus parasuis).